The sequence spans 170 residues: Neurotensin/neuromedin N (170 aa).

Positions 1-23 (MMAGMKIQLVCMILLAFSSWSLC) are cleaved as a signal peptide.

This sequence belongs to the neurotensin family. Interacts with NTSR1. Interacts with SORT1. Interacts with SORL1. In terms of processing, neurotensin is cleaved and degraded by Angiotensin-converting enzyme (ACE) and neprilysin (MME).

The protein resides in the secreted. The protein localises to the cytoplasmic vesicle. Its subcellular location is the secretory vesicle. Neurotensin may play an endocrine or paracrine role in the regulation of fat metabolism. It causes contraction of smooth muscle. In Canis lupus familiaris (Dog), this protein is Neurotensin/neuromedin N (NTS).